Consider the following 145-residue polypeptide: Basic phospholipase A2 cPt10 (145 aa).

Positions 1 to 21 (MYPAHLLVLLAVCVSLLGASA) are cleaved as a signal peptide. Positions 22 to 27 (IPPLPL) are excised as a propeptide. 7 disulfides stabilise this stretch: Cys38–Cys98, Cys54–Cys144, Cys56–Cys72, Cys71–Cys125, Cys78–Cys118, Cys87–Cys111, and Cys105–Cys116. 3 residues coordinate Ca(2+): Tyr55, Gly57, and Gly59. His75 is an active-site residue. Asp76 provides a ligand contact to Ca(2+). The active site involves Asp119.

The protein belongs to the phospholipase A2 family. Group I subfamily. D49 sub-subfamily. Ca(2+) serves as cofactor. In terms of tissue distribution, expressed by the venom gland.

It localises to the secreted. It carries out the reaction a 1,2-diacyl-sn-glycero-3-phosphocholine + H2O = a 1-acyl-sn-glycero-3-phosphocholine + a fatty acid + H(+). PLA2 catalyzes the calcium-dependent hydrolysis of the 2-acyl groups in 3-sn-phosphoglycerides. The polypeptide is Basic phospholipase A2 cPt10 (Laticauda semifasciata (Black-banded sea krait)).